The sequence spans 2892 residues: Inositol 1,4,5-trisphosphate receptor itr-1 (2892 aa).

The Cytoplasmic segment spans residues 1 to 2475 (MNPSYGRVRK…YPLPEHSNSS (2475 aa)). 4 MIR domains span residues 192-246 (GNVI…IEPA), 319-379 (QNSV…VQVV), 386-466 (GGTA…LGPT), and 490-551 (NKEV…LLPV). 357 to 361 (RMTNR) contacts 1D-myo-inositol 1,4,5-trisphosphate. Residues 625–628 (KLLR) and 689–691 (YRK) contribute to the 1D-myo-inositol 1,4,5-trisphosphate site. A disordered region spans residues 1030–1056 (MMRGGNKENSKDLAKTPSVTAEEAGRT). Basic and acidic residues predominate over residues 1034–1043 (GNKENSKDLA). Residues 2476–2496 (ISLGNLYSWFAVFSSFLLAHY) traverse the membrane as a helical segment. Topologically, residues 2497–2514 (LRHDKIYLHKTSLLILAS) are extracellular. The chain crosses the membrane as a helical span at residues 2515–2535 (LCFLLLSSIGVTLTLYIFGIL). Topologically, residues 2536–2572 (QLVNKIVHVVAFVSNKGLEDRPIAEILACRNLHYLLV) are cytoplasmic. The helical transmembrane segment at 2573–2593 (YLFICILGLLVHPMIYCILLF) threads the bilayer. Residues 2594 to 2615 (DIIFTEETLQNVIASVTRNYQS) lie on the Extracellular side of the membrane. A helical transmembrane segment spans residues 2616–2636 (IVWTGLLALILLYFFSILGFL). Residues 2637–2735 (YFRHDFYLEV…FIWRVAYDMT (99 aa)) are Cytoplasmic-facing. Residues 2655–2666 (ATISSGIPSETC) are compositionally biased toward polar residues. Residues 2655–2685 (ATISSGIPSETCPSEGCPGLQPSEKDDNDDE) are disordered. The helical transmembrane segment at 2736-2756 (FFVVLIVIVLNLIFGVIIDTF) threads the bilayer. Over 2757 to 2892 (GDLRAEKNEK…RAFMEQFQPR (136 aa)) the chain is Extracellular.

This sequence belongs to the InsP3 receptor family. In terms of assembly, interacts with myo-1, myo-2, unc-54/myo-4 and nmy-2. Also interacts with iri-1. Isoform a is expressed in the anterior cells of the pharyngeal terminal bulb, vulva, rectal epithelial cells, spicule protractor muscles of the proctodeum and male-specific neuron CP8 or CP9. Isoform d is expressed in the spermatheca, excretory cell, amphid socket cells, PDA motor neuron, spicule retractor muscles, gubernaculum retractor muscles, posterior oblique muscles, diagonal muscles and the vas deferens. Also expressed in the intestine, pharynx, pharyngeal isthmus, pharyngeal intestinal valve, somatic gonad, hypodermal cells of the vulva, uterine sheath cells, tail, head, LUA motor neuron and the embryonic epidermis (at protein level).

The protein resides in the endoplasmic reticulum membrane. Its function is as follows. Receptor for inositol 1,4,5-trisphosphate, a second messenger that regulates intracellular calcium homeostasis. Binds in vitro to both inositol 1,4,5-trisphosphate (1,4,5-InsP3) and inositol 2,4,5-trisphosphate (2,4,5-InsP3) with high affinity and does not discriminate between the phosphate at 1 or 2 position. Can also bind inositol 1,3,4,5-tetrakisphosphate (1,3,4,5-InsP4) and inositol 4,5-bisphosphate (4,5-InsP2), but with lower affinity. Acts as a timekeeper/rhythm generator via calcium signaling, affecting the defecation cycle and pharyngeal pumping. Affects normal hermaphrodite and male fertility as a participant in intracellular signaling by acting downstream of let-23/lin-3 which regulates ovulation, spermathecal valve dilation and male mating behavior. Important for early embryonic development; controls epidermal cell migration and may also regulate filopodial protrusive activity during epithelial morphogenesis. Component of inositol trisphosphate (IP3)-mediated downstream signaling pathways that controls amphid sensory neuronal (ASH)-mediated response to nose touch and benzaldehyde but not other ASH-mediated responses. Involved in modulating lifespan, acting downstream of transcription factor atf-6. In Caenorhabditis elegans, this protein is Inositol 1,4,5-trisphosphate receptor itr-1.